The chain runs to 234 residues: Interleukin-34 (234 aa).

A signal peptide spans Met-1–Gly-20. Residue Asn-99 is glycosylated (N-linked (GlcNAc...) asparagine). Residues Pro-215–Pro-234 are disordered. Positions Leu-222–Pro-234 are enriched in polar residues.

This sequence belongs to the IL-34 family. Homodimer. Interacts with CSF1R.

It localises to the secreted. Its function is as follows. Cytokine that promotes the proliferation, survival and differentiation of monocytes and macrophages. Promotes the release of pro-inflammatory chemokines, and thereby plays an important role in innate immunity and in inflammatory processes. Plays an important role in the regulation of osteoclast proliferation and differentiation, and in the regulation of bone resorption. Signaling via CSF1R and its downstream effectors stimulates phosphorylation of MAPK1/ERK2 AND MAPK3/ERK1. In Rattus norvegicus (Rat), this protein is Interleukin-34 (Il34).